The chain runs to 316 residues: Pantothenate kinase (316 aa).

95-102 (GSVAVGKS) serves as a coordination point for ATP.

Belongs to the prokaryotic pantothenate kinase family.

It localises to the cytoplasm. It carries out the reaction (R)-pantothenate + ATP = (R)-4'-phosphopantothenate + ADP + H(+). It functions in the pathway cofactor biosynthesis; coenzyme A biosynthesis; CoA from (R)-pantothenate: step 1/5. In Shewanella woodyi (strain ATCC 51908 / MS32), this protein is Pantothenate kinase.